Here is a 220-residue protein sequence, read N- to C-terminus: NADH-quinone oxidoreductase subunit I (220 aa).

4Fe-4S ferredoxin-type domains are found at residues 71 to 102 (LQRL…IITH) and 112 to 141 (DSYT…MGNR). [4Fe-4S] cluster is bound by residues C82, C85, C88, C92, C121, C124, C127, and C131. The tract at residues 187–220 (MQATPLDYVQEPSKEESKEESPTSPESHKGDENV) is disordered. Positions 198–220 (PSKEESKEESPTSPESHKGDENV) are enriched in basic and acidic residues.

The protein belongs to the complex I 23 kDa subunit family. In terms of assembly, NDH-1 is composed of 14 different subunits. Subunits NuoA, H, J, K, L, M, N constitute the membrane sector of the complex. [4Fe-4S] cluster serves as cofactor.

It is found in the cell inner membrane. The enzyme catalyses a quinone + NADH + 5 H(+)(in) = a quinol + NAD(+) + 4 H(+)(out). Functionally, NDH-1 shuttles electrons from NADH, via FMN and iron-sulfur (Fe-S) centers, to quinones in the respiratory chain. The immediate electron acceptor for the enzyme in this species is believed to be ubiquinone. Couples the redox reaction to proton translocation (for every two electrons transferred, four hydrogen ions are translocated across the cytoplasmic membrane), and thus conserves the redox energy in a proton gradient. The sequence is that of NADH-quinone oxidoreductase subunit I from Helicobacter pylori (strain J99 / ATCC 700824) (Campylobacter pylori J99).